We begin with the raw amino-acid sequence, 48 residues long: ATP synthase protein 8 (48 aa).

A helical transmembrane segment spans residues 12-32; it reads LLTFGMLAISMLLYLVSTIIL.

It belongs to the ATPase protein 8 family. In terms of assembly, F-type ATPases have 2 components, CF(1) - the catalytic core - and CF(0) - the membrane proton channel.

Its subcellular location is the mitochondrion membrane. Functionally, mitochondrial membrane ATP synthase (F(1)F(0) ATP synthase or Complex V) produces ATP from ADP in the presence of a proton gradient across the membrane which is generated by electron transport complexes of the respiratory chain. F-type ATPases consist of two structural domains, F(1) - containing the extramembraneous catalytic core and F(0) - containing the membrane proton channel, linked together by a central stalk and a peripheral stalk. During catalysis, ATP synthesis in the catalytic domain of F(1) is coupled via a rotary mechanism of the central stalk subunits to proton translocation. Part of the complex F(0) domain. Minor subunit located with subunit a in the membrane. This Debaryomyces hansenii (strain ATCC 36239 / CBS 767 / BCRC 21394 / JCM 1990 / NBRC 0083 / IGC 2968) (Yeast) protein is ATP synthase protein 8 (ATP8).